The primary structure comprises 248 residues: tRNA pseudouridine synthase A (248 aa).

The active-site Nucleophile is D52. Y111 contributes to the substrate binding site.

This sequence belongs to the tRNA pseudouridine synthase TruA family. In terms of assembly, homodimer.

The enzyme catalyses uridine(38/39/40) in tRNA = pseudouridine(38/39/40) in tRNA. Functionally, formation of pseudouridine at positions 38, 39 and 40 in the anticodon stem and loop of transfer RNAs. This chain is tRNA pseudouridine synthase A, found in Methylocella silvestris (strain DSM 15510 / CIP 108128 / LMG 27833 / NCIMB 13906 / BL2).